A 251-amino-acid polypeptide reads, in one-letter code: MVTSTGPEAELAPIEQAKKRAAFACGEKYVQSGCRLGVGSGSTVKYLVEYLKQGFQNGSLKDIICVPTSFLTKQWLIESGLPVSDLDSHPELDVCIDGADEVDGQFTCIKGGGGCLAQEKIVQTAAKNFYVIADYLKDSKHLGDRYPNVPIEVLPLAAQPLLRSIPRAEGGSCQLRQAVKKCGPIVTDNGNFIIDWQFEKNVSGRDWFAIQQRLANTPGIVETGLFIGCVDAVFFAYSDGSVKEIVNSKKH.

It belongs to the ribose 5-phosphate isomerase family.

The catalysed reaction is aldehydo-D-ribose 5-phosphate = D-ribulose 5-phosphate. The protein operates within carbohydrate degradation; pentose phosphate pathway; D-ribose 5-phosphate from D-ribulose 5-phosphate (non-oxidative stage): step 1/1. This Caenorhabditis elegans protein is Probable-ribose 5-phosphate isomerase (rpia-1).